The chain runs to 264 residues: PDZ domain-containing protein 9 (264 aa).

Residues 30-109 form the PDZ domain; the sequence is QTKLTVGSLG…GTVLQIKVYR (80 aa).

In Homo sapiens (Human), this protein is PDZ domain-containing protein 9 (PDZD9).